A 409-amino-acid chain; its full sequence is Mitochondrial import inner membrane translocase subunit TIM50-B (409 aa).

A mitochondrion-targeting transit peptide spans 1–42; the sequence is MSLIAIERVLCGWPKICRKLIVTSRSLTSGLRRALVKQPRKG. At 43–127 the chain is on the mitochondrial matrix side; that stretch reads GDVGKPGMEL…ELERAFRRMK (85 aa). A disordered region spans residues 93–114; that stretch reads PQTSEESNDEESRERRKLEEEE. A compositionally biased stretch (basic and acidic residues) spans 102–111; that stretch reads EESRERRKLE. A helical membrane pass occupies residues 128–148; it reads LGFGLFGIGSMLFSFWAIYFY. The Mitochondrial intermembrane portion of the chain corresponds to 149–409; that stretch reads GRPSLDEHGN…KNWTRGFINH (261 aa). Residues 205–348 enclose the FCP1 homology domain; the sequence is YVQPPYTLVL…FELTSFLSVL (144 aa).

It belongs to the TIM50 family. As to quaternary structure, component of the TIM23 complex at least composed of Tim23, Tim17 (Tim17a1, Tim17a2 or Tim17b1) and a Tim50. Exclusively expressed in the testis.

It is found in the mitochondrion inner membrane. Its function is as follows. Essential component of the TIM23 complex, a complex that mediates the translocation of transit peptide-containing proteins across the mitochondrial inner membrane. The protein is Mitochondrial import inner membrane translocase subunit TIM50-B (ttm2) of Drosophila melanogaster (Fruit fly).